Reading from the N-terminus, the 394-residue chain is Cell division protein FtsZ (394 aa).

GTP is bound by residues Gly21 to Asn25, Gly108 to Gly110, Glu139, Arg143, and Asp187.

This sequence belongs to the FtsZ family. As to quaternary structure, homodimer. Polymerizes to form a dynamic ring structure in a strictly GTP-dependent manner. Interacts directly with several other division proteins.

The protein resides in the cytoplasm. In terms of biological role, essential cell division protein that forms a contractile ring structure (Z ring) at the future cell division site. The regulation of the ring assembly controls the timing and the location of cell division. One of the functions of the FtsZ ring is to recruit other cell division proteins to the septum to produce a new cell wall between the dividing cells. Binds GTP and shows GTPase activity. The polypeptide is Cell division protein FtsZ (Azotobacter vinelandii).